The following is a 219-amino-acid chain: MSAKESLLTGTFEERVEAALDALRRGHGVLVTDDEDRENEGDLIFAAETLSDSQMAMLIRECSGIVCLCLTDEKVRALGLPMMVENNSSQYQTAFTVSIEASCGVSTGVSAADRVCTIQAAIADDACPSDLCRPGHVFPLRARPGGVLERRGHTEATVDLMRLAGLKPCGVLCEVTNPDGTMARLPQIVDFGRKHDMVVLTVDDLVRYREMKENKSAAA.

Residues Arg-37–Glu-38, Asp-42, Arg-150–Thr-154, and Glu-174 each bind D-ribulose 5-phosphate. Glu-38 lines the Mg(2+) pocket. A Mg(2+)-binding site is contributed by His-153.

Belongs to the DHBP synthase family. Homodimer. Mg(2+) serves as cofactor. It depends on Mn(2+) as a cofactor.

The catalysed reaction is D-ribulose 5-phosphate = (2S)-2-hydroxy-3-oxobutyl phosphate + formate + H(+). It participates in cofactor biosynthesis; riboflavin biosynthesis; 2-hydroxy-3-oxobutyl phosphate from D-ribulose 5-phosphate: step 1/1. Its function is as follows. Catalyzes the conversion of D-ribulose 5-phosphate to formate and 3,4-dihydroxy-2-butanone 4-phosphate. In Oleidesulfovibrio alaskensis (strain ATCC BAA-1058 / DSM 17464 / G20) (Desulfovibrio alaskensis), this protein is 3,4-dihydroxy-2-butanone 4-phosphate synthase.